The chain runs to 215 residues: Large ribosomal subunit protein uL3 (215 aa).

The disordered stretch occupies residues 136–155 (GVSISHRSHGSTGQRQDPGK). Q151 carries the post-translational modification N5-methylglutamine.

This sequence belongs to the universal ribosomal protein uL3 family. Part of the 50S ribosomal subunit. Forms a cluster with proteins L14 and L19. In terms of processing, methylated by PrmB.

One of the primary rRNA binding proteins, it binds directly near the 3'-end of the 23S rRNA, where it nucleates assembly of the 50S subunit. This is Large ribosomal subunit protein uL3 from Rickettsia typhi (strain ATCC VR-144 / Wilmington).